The following is a 187-amino-acid chain: Phospholipase A2-gamma (187 aa).

Residues 1 to 25 (MITGLALSRVAFGLTAFLLLAVVSS) form the signal peptide. Intrachain disulfides connect C29–C56, C33–C62, C38–C115, C49–C69, C68–C93, and C75–C86. Residues Y48, G50, and Y53 each coordinate Ca(2+). H72 is an active-site residue. Position 73 (D73) interacts with Ca(2+).

This sequence belongs to the phospholipase A2 family. Requires Ca(2+) as cofactor. Strongly expressed in mature flowers but weakly expressed in other tissues. Detected in buds, open flowers and in pollen.

It localises to the secreted. It is found in the golgi apparatus. Its subcellular location is the trans-Golgi network. The protein resides in the endoplasmic reticulum. It catalyses the reaction a 1,2-diacyl-sn-glycero-3-phosphocholine + H2O = a 1-acyl-sn-glycero-3-phosphocholine + a fatty acid + H(+). Its function is as follows. PA2 catalyzes the calcium-dependent hydrolysis of the 2-acyl groups in 3-sn-phosphoglycerides. Releases lysophospholipids (LPLs) and free fatty acids (FFAs) from membrane phospholipids in response to hormones and other external stimuli. Plays a role in pollen development and germination and tube growth. This Arabidopsis thaliana (Mouse-ear cress) protein is Phospholipase A2-gamma (PLA2-GAMMA).